A 258-amino-acid polypeptide reads, in one-letter code: tRNA pseudouridine synthase A (258 aa).

Asp-52 functions as the Nucleophile in the catalytic mechanism. Tyr-110 contacts substrate.

Belongs to the tRNA pseudouridine synthase TruA family. In terms of assembly, homodimer.

It carries out the reaction uridine(38/39/40) in tRNA = pseudouridine(38/39/40) in tRNA. Functionally, formation of pseudouridine at positions 38, 39 and 40 in the anticodon stem and loop of transfer RNAs. The chain is tRNA pseudouridine synthase A from Francisella tularensis subsp. holarctica (strain LVS).